Consider the following 219-residue polypeptide: Octanoyltransferase (219 aa).

Residues 31 to 206 (TASADEIWLV…ECLRLMKASA (176 aa)) form the BPL/LPL catalytic domain. Substrate contacts are provided by residues 70–77 (RGGQVTFH), 137–139 (SLG), and 150–152 (GLA). C168 serves as the catalytic Acyl-thioester intermediate.

It belongs to the LipB family.

It is found in the cytoplasm. The catalysed reaction is octanoyl-[ACP] + L-lysyl-[protein] = N(6)-octanoyl-L-lysyl-[protein] + holo-[ACP] + H(+). The protein operates within protein modification; protein lipoylation via endogenous pathway; protein N(6)-(lipoyl)lysine from octanoyl-[acyl-carrier-protein]: step 1/2. In terms of biological role, catalyzes the transfer of endogenously produced octanoic acid from octanoyl-acyl-carrier-protein onto the lipoyl domains of lipoate-dependent enzymes. Lipoyl-ACP can also act as a substrate although octanoyl-ACP is likely to be the physiological substrate. This Sodalis glossinidius (strain morsitans) protein is Octanoyltransferase.